A 369-amino-acid chain; its full sequence is Core-capsid bridging protein (369 aa).

The interval 15–50 (APEIYGPPKKEEQDYKPRKLKRVKKKKKDDDDDELD) is disordered. Positions 22–31 (PKKEEQDYKP) are enriched in basic and acidic residues. Residues 32–41 (RKLKRVKKKK) show a composition bias toward basic residues. Position 85 is a phosphothreonine; by host (Thr85). Ser166 bears the Phosphoserine; by host mark. Residues 307-342 (PGYRGYTYRPRRRATTRRRTTTGTRRRRRRRQPVLA) are disordered. Residues 315–338 (RPRRRATTRRRTTTGTRRRRRRRQ) are compositionally biased toward basic residues.

The protein belongs to the adenoviridae core-capsid bridging protein family. As to quaternary structure, monomer. Homodimer. Exists in equilibrium between monomers and dimers in solution. Interacts with the histone-like nucleoprotein; this interactions bridge the virus core to the capsid. Interacts with core protein X; this interactions bridge the virus core to the capsid. Interacts with the endosome lysis protein VI; this interactions bridge the virus core to the capsid. Interacts with the peripentonal hexons. Interacts with host NPM1; this interaction might play a role in virus assembly.

The protein resides in the virion. The protein localises to the host nucleus. It is found in the host nucleolus. Its function is as follows. Associates loosely with the viral DNA to form an outer shell around the nucleoprotein-DNA complex and links it with the capsid by binding the endosome lysis protein. Dissociates from the viral genome during entry. Might be involved in nuclear capsid assembly of the viral particles through its association with NPM1/nucleophosmin. The chain is Core-capsid bridging protein from Homo sapiens (Human).